The chain runs to 501 residues: Ribose import ATP-binding protein RbsA (501 aa).

2 ABC transporter domains span residues 8–245 and 255–500; these read LKMV…VGRT and VKKG…VGIN. 40–47 is an ATP binding site; the sequence is GENGAGKS.

It belongs to the ABC transporter superfamily. Ribose importer (TC 3.A.1.2.1) family. As to quaternary structure, the complex is composed of an ATP-binding protein (RbsA), two transmembrane proteins (RbsC) and a solute-binding protein (RbsB).

Its subcellular location is the cell membrane. The enzyme catalyses D-ribose(out) + ATP + H2O = D-ribose(in) + ADP + phosphate + H(+). Its function is as follows. Part of the ABC transporter complex RbsABC involved in ribose import. Responsible for energy coupling to the transport system. The protein is Ribose import ATP-binding protein RbsA of Clostridium perfringens (strain SM101 / Type A).